We begin with the raw amino-acid sequence, 331 residues long: MSDNKKQQALELALKQIEKQFGKGSIMKLGDGADHSIEAIPSGSIALDIALGIGGYPRGRIIEVYGPESSGKTTLTLHAMASAQKQGGTVAFIDAEHALDPNYAKALGVDLDNLVLSQPDTGEQALDIAEALIKSGSIDMIVIDSVAALVPEAEIAGDMSANHVGLQARMMSQAMRKMSGVISKSNVVAIFINQIREKVGVMFGNPETTPGGRALKFFSSVRLEIRRAEAIKQGSEMIGIKSNVKVVKSKVAPPLKTASIDIMYGTGISRSGEVLDLSVELNLVNKSGAWYNIGEEKLGQGRDNAKQYLEDKPELLNELEKKVRTHFKLTK.

Residue 66–73 coordinates ATP; the sequence is GPESSGKT.

Belongs to the RecA family.

Its subcellular location is the cytoplasm. Functionally, can catalyze the hydrolysis of ATP in the presence of single-stranded DNA, the ATP-dependent uptake of single-stranded DNA by duplex DNA, and the ATP-dependent hybridization of homologous single-stranded DNAs. It interacts with LexA causing its activation and leading to its autocatalytic cleavage. The sequence is that of Protein RecA from Acholeplasma laidlawii.